The primary structure comprises 993 residues: DNA double-strand break repair Rad50 ATPase (993 aa).

ATP contacts are provided by residues Arg-12, 32-38, and Gln-133; that span reads NGSGKSS. 2 coiled-coil regions span residues 192 to 222 and 402 to 493; these read LENL…LEKL and EELK…LEKT. A Zinc-hook domain is found at 452–556; the sequence is ENELKEKYED…KLNEIDSFKL (105 aa). 2 residues coordinate Zn(2+): Cys-497 and Cys-500. Coiled coils occupy residues 570–612, 646–677, and 702–731; these read KVEE…LEND, DSSK…EINL, and ETEK…VLKN.

The protein belongs to the SMC family. RAD50 subfamily. As to quaternary structure, homodimer. Forms a heterotetramer composed of two Mre11 subunits and two Rad50 subunits. The cofactor is Zn(2+).

Its function is as follows. Part of the Rad50/Mre11 complex, which is involved in the early steps of DNA double-strand break (DSB) repair. The complex may facilitate opening of the processed DNA ends to aid in the recruitment of HerA and NurA. Rad50 controls the balance between DNA end bridging and DNA resection via ATP-dependent structural rearrangements of the Rad50/Mre11 complex. The sequence is that of DNA double-strand break repair Rad50 ATPase from Methanococcus maripaludis (strain DSM 14266 / JCM 13030 / NBRC 101832 / S2 / LL).